A 227-amino-acid polypeptide reads, in one-letter code: MFS-type transporter FVEG_08288 (227 aa).

Residues 8–28 (VFLTVLIAIASCSVYILNIAI) traverse the membrane as a helical segment. N40 is a glycosylation site (N-linked (GlcNAc...) asparagine). Transmembrane regions (helical) follow at residues 43 to 63 (TVGL…MAGG), 100 to 120 (VANT…YYGV), 122 to 142 (FMVP…HFTL), 164 to 181 (FVRN…APWM), and 188 to 208 (YMMT…IWLI).

Belongs to the major facilitator superfamily.

The protein localises to the membrane. MFS-type transporter; part of the Fusarium detoxification of benzoxazolinone cluster 1 (FDB1) involved in the degradation of benzoxazolinones produced by the host plant. Maize, wheat, and rye produce the 2 benzoxazinone phytoanticipins 2,4-dihy-droxy-7-methoxy-1,4-benzoxazin-3-one (DIMBOA) and 2,4-dihydroxy-1,4-benzoxazin-3-one (DIBOA) that, due to their inherent instability once released, spontaneously degrade to the more stable corresponding benzoxazolinones, 6-methoxy-2-benzoxazolinone (MBOA) and 2-benzoxazolinone (BOA), respectively. The protein is MFS-type transporter FVEG_08288 of Gibberella moniliformis (strain M3125 / FGSC 7600) (Maize ear and stalk rot fungus).